Consider the following 208-residue polypeptide: Urease accessory protein UreG (208 aa).

10 to 17 (GPVGSGKT) provides a ligand contact to GTP.

The protein belongs to the SIMIBI class G3E GTPase family. UreG subfamily. In terms of assembly, homodimer. UreD, UreF and UreG form a complex that acts as a GTP-hydrolysis-dependent molecular chaperone, activating the urease apoprotein by helping to assemble the nickel containing metallocenter of UreC. The UreE protein probably delivers the nickel.

Its subcellular location is the cytoplasm. In terms of biological role, facilitates the functional incorporation of the urease nickel metallocenter. This process requires GTP hydrolysis, probably effectuated by UreG. The protein is Urease accessory protein UreG of Halalkalibacterium halodurans (strain ATCC BAA-125 / DSM 18197 / FERM 7344 / JCM 9153 / C-125) (Bacillus halodurans).